Here is a 466-residue protein sequence, read N- to C-terminus: Ribulose bisphosphate carboxylase large chain (466 aa).

Position 5 is an N6,N6,N6-trimethyllysine (Lys5). Substrate is bound by residues Asn114 and Thr164. Lys166 serves as the catalytic Proton acceptor. Lys168 provides a ligand contact to substrate. The Mg(2+) site is built by Lys192, Asp194, and Glu195. Residue Lys192 is modified to N6-carboxylysine. His285 acts as the Proton acceptor in catalysis. Positions 286, 318, and 370 each coordinate substrate.

The protein belongs to the RuBisCO large chain family. Type I subfamily. Heterohexadecamer of 8 large chains and 8 small chains; disulfide-linked. The disulfide link is formed within the large subunit homodimers. It depends on Mg(2+) as a cofactor. In terms of processing, the disulfide bond which can form in the large chain dimeric partners within the hexadecamer appears to be associated with oxidative stress and protein turnover.

The protein resides in the plastid. The protein localises to the chloroplast. The enzyme catalyses 2 (2R)-3-phosphoglycerate + 2 H(+) = D-ribulose 1,5-bisphosphate + CO2 + H2O. The catalysed reaction is D-ribulose 1,5-bisphosphate + O2 = 2-phosphoglycolate + (2R)-3-phosphoglycerate + 2 H(+). RuBisCO catalyzes two reactions: the carboxylation of D-ribulose 1,5-bisphosphate, the primary event in carbon dioxide fixation, as well as the oxidative fragmentation of the pentose substrate in the photorespiration process. Both reactions occur simultaneously and in competition at the same active site. This Cucurbita pepo (Vegetable marrow) protein is Ribulose bisphosphate carboxylase large chain.